Consider the following 377-residue polypeptide: Chaperone protein DnaJ (377 aa).

The J domain occupies 5–70 (DYYQILGIPK…EKRSAYDQYG (66 aa)). The segment at 132–210 (GIKKEIQIPT…CHGQGRVETY (79 aa)) adopts a CR-type zinc-finger fold. Positions 145, 148, 162, 165, 184, 187, 198, and 201 each coordinate Zn(2+). 4 CXXCXGXG motif repeats span residues 145–152 (CKTCYGSG), 162–169 (CSTCHGKG), 184–191 (CPTCHGKG), and 198–205 (CNLCHGQG).

This sequence belongs to the DnaJ family. In terms of assembly, homodimer. Zn(2+) is required as a cofactor.

Its subcellular location is the cytoplasm. Participates actively in the response to hyperosmotic and heat shock by preventing the aggregation of stress-denatured proteins and by disaggregating proteins, also in an autonomous, DnaK-independent fashion. Unfolded proteins bind initially to DnaJ; upon interaction with the DnaJ-bound protein, DnaK hydrolyzes its bound ATP, resulting in the formation of a stable complex. GrpE releases ADP from DnaK; ATP binding to DnaK triggers the release of the substrate protein, thus completing the reaction cycle. Several rounds of ATP-dependent interactions between DnaJ, DnaK and GrpE are required for fully efficient folding. Also involved, together with DnaK and GrpE, in the DNA replication of plasmids through activation of initiation proteins. The protein is Chaperone protein DnaJ of Buchnera aphidicola subsp. Acyrthosiphon pisum (strain Tuc7).